The following is a 328-amino-acid chain: Malate dehydrogenase (328 aa).

Glycine 11–glycine 17 is an NAD(+) binding site. Arginine 94 and arginine 100 together coordinate substrate. NAD(+) contacts are provided by residues asparagine 107, glutamine 114, and valine 131–asparagine 133. Residues asparagine 133 and arginine 164 each coordinate substrate. The active-site Proton acceptor is the histidine 189.

Belongs to the LDH/MDH superfamily. MDH type 2 family.

It carries out the reaction (S)-malate + NAD(+) = oxaloacetate + NADH + H(+). In terms of biological role, catalyzes the reversible oxidation of malate to oxaloacetate. In Xanthomonas axonopodis pv. citri (strain 306), this protein is Malate dehydrogenase.